We begin with the raw amino-acid sequence, 89 residues long: Small ribosomal subunit protein bS18 (89 aa).

This sequence belongs to the bacterial ribosomal protein bS18 family. In terms of assembly, part of the 30S ribosomal subunit. Forms a tight heterodimer with protein bS6.

Functionally, binds as a heterodimer with protein bS6 to the central domain of the 16S rRNA, where it helps stabilize the platform of the 30S subunit. This Treponema denticola (strain ATCC 35405 / DSM 14222 / CIP 103919 / JCM 8153 / KCTC 15104) protein is Small ribosomal subunit protein bS18.